The chain runs to 424 residues: Histidine--tRNA ligase (424 aa).

Belongs to the class-II aminoacyl-tRNA synthetase family. As to quaternary structure, homodimer.

The protein localises to the cytoplasm. It carries out the reaction tRNA(His) + L-histidine + ATP = L-histidyl-tRNA(His) + AMP + diphosphate + H(+). The polypeptide is Histidine--tRNA ligase (Salmonella paratyphi A (strain ATCC 9150 / SARB42)).